The primary structure comprises 303 residues: Elongation factor Ts (303 aa).

The involved in Mg(2+) ion dislocation from EF-Tu stretch occupies residues 81–84; sequence TDFV.

Belongs to the EF-Ts family.

The protein resides in the cytoplasm. Associates with the EF-Tu.GDP complex and induces the exchange of GDP to GTP. It remains bound to the aminoacyl-tRNA.EF-Tu.GTP complex up to the GTP hydrolysis stage on the ribosome. This Mesomycoplasma hyopneumoniae (strain 232) (Mycoplasma hyopneumoniae) protein is Elongation factor Ts.